A 609-amino-acid chain; its full sequence is UvrABC system protein C (609 aa).

Residues E22–V100 form the GIY-YIG domain. The 36-residue stretch at Q214–Y249 folds into the UVR domain.

It belongs to the UvrC family. In terms of assembly, interacts with UvrB in an incision complex.

It localises to the cytoplasm. Functionally, the UvrABC repair system catalyzes the recognition and processing of DNA lesions. UvrC both incises the 5' and 3' sides of the lesion. The N-terminal half is responsible for the 3' incision and the C-terminal half is responsible for the 5' incision. The protein is UvrABC system protein C of Bacteroides thetaiotaomicron (strain ATCC 29148 / DSM 2079 / JCM 5827 / CCUG 10774 / NCTC 10582 / VPI-5482 / E50).